We begin with the raw amino-acid sequence, 212 residues long: Uracil-DNA glycosylase (212 aa).

D59 functions as the Proton acceptor in the catalytic mechanism.

This sequence belongs to the uracil-DNA glycosylase (UDG) superfamily. UNG family.

The protein localises to the cytoplasm. It catalyses the reaction Hydrolyzes single-stranded DNA or mismatched double-stranded DNA and polynucleotides, releasing free uracil.. Its function is as follows. Excises uracil residues from the DNA which can arise as a result of misincorporation of dUMP residues by DNA polymerase or due to deamination of cytosine. The chain is Uracil-DNA glycosylase from Ureaplasma urealyticum serovar 10 (strain ATCC 33699 / Western).